The chain runs to 469 residues: Coumaroyl-CoA:anthocyanidin 3-O-glucoside-6''-O-coumaroyltransferase 1 (469 aa).

Position 1 is an N-acetylmethionine (methionine 1). Active-site proton acceptor residues include histidine 173 and aspartate 410.

The protein belongs to the plant acyltransferase family. In terms of tissue distribution, highly expressed in flowers, leaves and roots. Lower levels of expression in stems and siliques.

Involved in the acylation of the 6'' position of the 3-O-glucose residue of anthocyanin. Also able to use flavonol 3-glucosides as the acyl acceptor. In Arabidopsis thaliana (Mouse-ear cress), this protein is Coumaroyl-CoA:anthocyanidin 3-O-glucoside-6''-O-coumaroyltransferase 1 (3AT1).